Consider the following 402-residue polypeptide: Secreted RxLR effector protein 73 (402 aa).

Positions 1-23 are cleaved as a signal peptide; it reads MRLLHVVVATVSLTGAITSLIAA. Asn-27 carries N-linked (GlcNAc...) asparagine glycosylation. A RxLR motif is present at residues 104–107; the sequence is RVLR. N-linked (GlcNAc...) asparagine glycosylation is found at Asn-111, Asn-134, Asn-143, Asn-165, and Asn-286.

Belongs to the RxLR effector family.

The protein resides in the secreted. The protein localises to the host cell. Secreted effector that completely suppresses the host cell death induced by cell death-inducing proteins. The chain is Secreted RxLR effector protein 73 from Plasmopara viticola (Downy mildew of grapevine).